A 707-amino-acid polypeptide reads, in one-letter code: MLDGPLFSEGPDSPRELQDEESGSCLWVQKSKLLVIEVKTISCHYSRRAASRQSMDIQASYWARGPQNRTCRLRPGSPEPPPRRPWASRVLQEATNWRAGPPAEVRAREQEKRKAASQEREAKETERKRRKAGGARRSPLGQPRPELRNALRAAQPTGFPVFSRPERFGQVGRAPRPSALPQGDPGVAWAGPWGGRRPGPPSYEAHLLLRGAAGTAPRRRWDRPPPYVAPPSYEGPHRTLGTKRGPELSRAPTSSAPVPATTRTEGGRTKKRLDPRIYRDVLGAWGLRQGRGLLGGAPGCAAARARPESCKGAVEKSSGLAAAGLNSGGDGHSQAKTTGPVTEVALSGSTISSPPRPVPRSRQHLRGSRKGKEGSEEMWLPTCWLSSPKKPPVRHSQTLPRPWAPGGTGWKESLGQREGTEHETLEVWKVTRRAHTLPRSSRGPAGREGIFVIDATCVVIKSQYVPTPRTQQRQLAPSGESCIVSDSLRQPKPCLEEEGKGAAANPSVCQKRLLSSRVLNPPSEGREFEAEGRQQGDSSLEERSSSGLGFPVGEVNPRDAPTHPGSPEHSTLGPAAPGCAGSVKGPEAAGVPRRAGGGWARTPGPYAGALREAVSRIRRHTAPDSDSDEAEDLSAHSGSSDGSDTDAPGASWRNERTLPAVGNTRPREGGKTAELGDSIGEILDVISQTEEGLVREDTRKTPQGKRE.

Disordered regions lie at residues 1–22 (MLDG…DEES), 67–86 (QNRT…RRPW), 94–195 (ATNW…PWGG), 213–273 (AGTA…KKRL), and 342–377 (TEVA…GSEE). Residues 103–134 (AEVRAREQEKRKAASQEREAKETERKRRKAGG) are a coiled coil. The span at 105–127 (VRAREQEKRKAASQEREAKETER) shows a compositional bias: basic and acidic residues. Positions 113-131 (RKAASQEREAKETERKRRK) are nuclear localization. The interaction with MAGI2 stretch occupies residues 186 to 236 (GVAWAGPWGGRRPGPPSYEAHLLLRGAAGTAPRRRWDRPPPYVAPPSYEGP). The segment at 340–434 (PVTEVALSGS…LEVWKVTRRA (95 aa)) is interaction with ACTN1. Basic residues predominate over residues 359-369 (PRSRQHLRGSR). A Phosphoserine modification is found at S387. 2 disordered regions span residues 389-421 (KKPP…EGTE) and 517-707 (RVLN…GKRE). Residues 406-707 (GGTGWKESLG…TRKTPQGKRE (302 aa)) form an interaction with CD2AP and NPHS1 region. 2 stretches are compositionally biased toward basic and acidic residues: residues 524–544 (EGRE…EERS) and 692–707 (GLVR…GKRE).

Forms a ternary complex with MAGI2 and SH3KBP1; recruits DDN to the cytoplasm. Interacts with MAGI1. Interacts with ACTN1 and may interact with WWC1. Interacts with the podocyte slit diaphragm proteins CD2AP, NPHS1 and NPHS2; the interaction with CD2AP and NPHS1 is direct. Specifically expressed in forebrain structures, particularly in neocortex, olfactory bulb, hippocampus, caudate-putamen, and limbic system (at protein level). Also detected in spleen, liver, kidney and placenta (at protein level).

It localises to the cell projection. The protein localises to the dendritic spine membrane. The protein resides in the cytoplasm. Its subcellular location is the endoplasmic reticulum membrane. It is found in the perikaryon. It localises to the nucleus. Promotes apoptosis of kidney glomerular podocytes. Podocytes are highly specialized cells essential to the ultrafiltration of blood, resulting in the extraction of urine and the retention of protein. This chain is Dendrin (Ddn), found in Rattus norvegicus (Rat).